A 233-amino-acid chain; its full sequence is ATP synthase subunit a, chloroplastic (233 aa).

The next 4 helical transmembrane spans lie at Val-27–Leu-47, Val-84–Ile-104, Asp-122–Phe-142, and Val-192–Ala-212.

The protein belongs to the ATPase A chain family. In terms of assembly, F-type ATPases have 2 components, CF(1) - the catalytic core - and CF(0) - the membrane proton channel. CF(1) has five subunits: alpha(3), beta(3), gamma(1), delta(1), epsilon(1). CF(0) has four main subunits: a, b, b' and c.

It is found in the plastid. Its subcellular location is the chloroplast thylakoid membrane. In terms of biological role, key component of the proton channel; it plays a direct role in the translocation of protons across the membrane. The sequence is that of ATP synthase subunit a, chloroplastic from Ochrosphaera neapolitana.